The chain runs to 206 residues: Small ribosomal subunit protein uS4 (206 aa).

An S4 RNA-binding domain is found at 96–156 (TRLDNVVYRM…EKSRTQARIK (61 aa)).

It belongs to the universal ribosomal protein uS4 family. In terms of assembly, part of the 30S ribosomal subunit. Contacts protein S5. The interaction surface between S4 and S5 is involved in control of translational fidelity.

One of the primary rRNA binding proteins, it binds directly to 16S rRNA where it nucleates assembly of the body of the 30S subunit. Its function is as follows. With S5 and S12 plays an important role in translational accuracy. The polypeptide is Small ribosomal subunit protein uS4 (Shewanella denitrificans (strain OS217 / ATCC BAA-1090 / DSM 15013)).